Consider the following 195-residue polypeptide: MIASIRGVIQSIGNDYLIVETGGIGFLIYAPRSTLSAAGAVGSDIFLHTILIVREDALTLYGFSDNAQRSLFEQLIGVSGVGPKLALSLLSSGTPDEVRSMIAGGDVARLARVPGIGKKTAERIVLELRGKIDFRQLAASGSTSVSALDRELSEILVSLGYSAAEAAAAIASLPSDAPPTLEERLRLALRYFGSA.

The interval 1–64 (MIASIRGVIQ…EDALTLYGFS (64 aa)) is domain I. Residues 65–139 (DNAQRSLFEQ…GKIDFRQLAA (75 aa)) form a domain II region. A flexible linker region spans residues 139–143 (ASGST). The interval 144-195 (SVSALDRELSEILVSLGYSAAEAAAAIASLPSDAPPTLEERLRLALRYFGSA) is domain III.

Belongs to the RuvA family. As to quaternary structure, homotetramer. Forms an RuvA(8)-RuvB(12)-Holliday junction (HJ) complex. HJ DNA is sandwiched between 2 RuvA tetramers; dsDNA enters through RuvA and exits via RuvB. An RuvB hexamer assembles on each DNA strand where it exits the tetramer. Each RuvB hexamer is contacted by two RuvA subunits (via domain III) on 2 adjacent RuvB subunits; this complex drives branch migration. In the full resolvosome a probable DNA-RuvA(4)-RuvB(12)-RuvC(2) complex forms which resolves the HJ.

It is found in the cytoplasm. In terms of biological role, the RuvA-RuvB-RuvC complex processes Holliday junction (HJ) DNA during genetic recombination and DNA repair, while the RuvA-RuvB complex plays an important role in the rescue of blocked DNA replication forks via replication fork reversal (RFR). RuvA specifically binds to HJ cruciform DNA, conferring on it an open structure. The RuvB hexamer acts as an ATP-dependent pump, pulling dsDNA into and through the RuvAB complex. HJ branch migration allows RuvC to scan DNA until it finds its consensus sequence, where it cleaves and resolves the cruciform DNA. The sequence is that of Holliday junction branch migration complex subunit RuvA from Chloroflexus aggregans (strain MD-66 / DSM 9485).